The sequence spans 693 residues: TGF-beta-activated kinase 1 and MAP3K7-binding protein 2 (693 aa).

Positions 8–51 (IDFQVLHDLRQKFPEVPEVVVSRCMLQNNNNLDACCAVLSQEST) constitute a CUE domain. Residues 90–117 (HGREGSRVNGSRTLTHSVSDGQLQGGQS) form a disordered region. Residues 97–117 (VNGSRTLTHSVSDGQLQGGQS) are compositionally biased toward polar residues. An Asymmetric dimethylarginine modification is found at R173. The segment covering 224–282 (GAARQTQQHSGWVSQFNPVNPQQAYQPSQPGPWTTYPASNPLPHTSTQQPNQQGHQTSH) has biased composition (polar residues). The interval 224-310 (GAARQTQQHS…SASSQSSAHS (87 aa)) is disordered. The segment covering 286-310 (PISSPTTPQPPTVHSSASSQSSAHS) has biased composition (low complexity). K329 participates in a covalent cross-link: Glycyl lysine isopeptide (Lys-Gly) (interchain with G-Cter in SUMO). The interval 330-361 (LEPPQRNSSSKLRSSGPRTASTSSLVNSQTLN) is disordered. Polar residues predominate over residues 334–361 (QRNSSSKLRSSGPRTASTSSLVNSQTLN). S372, S450, S482, and S524 each carry phosphoserine. The stretch at 532–619 (YTQALLVHQK…TKEIDLFQAR (88 aa)) forms a coiled coil. Residue K562 forms a Glycyl lysine isopeptide (Lys-Gly) (interchain with G-Cter in SUMO) linkage. Residues 564 to 583 (EVNEMENSLTRRRLKRSNSM) are disordered. S582 carries the post-translational modification Phosphoserine. K611 participates in a covalent cross-link: Glycyl lysine isopeptide (Lys-Gly) (interchain with G-Cter in ubiquitin). Positions 640–663 (PVPPKPKDQRSTIKAPKTQDTEDE) are disordered. The RanBP2-type zinc-finger motif lies at 663–693 (EEGAQWNCTACTFLNHPALIRCEQCEMPRHF). Residues 675 to 685 (FLNHPALIRCE) form an interaction with polyubiquitin region.

Interacts with MAP3K7 and TRAF6. Identified in the TRIKA2 complex composed of MAP3K7, TAB1 and TAB2. Binds 'Lys-63'-linked polyubiquitin chains. Interacts with NCOR1 and HDAC3 to form a ternary complex. Interacts (via C-terminal) with NUMBL (via PTB domain). Interacts (via the C-terminus) with DYNC2I2 (via WD domains). Interacts with RBCK1. Interacts with TRIM5. Interacts with TRIM38 (via B30.2/SPRY domain), leading to its translocation to lysosomes and degradation. Interacts with ASB1; this interaction promotes TAB2 stability. SUMOylated by TRIM60; leading to inhibition of MAPK/NF-kappaB activation and the innate immune response. Post-translationally, ubiquitinated; following IL1 stimulation or TRAF6 overexpression. Ubiquitination involves RBCK1 leading to proteasomal degradation. Ubiquitinated at Lys-611 by TRIM45 leading to proteasomal degradation. In terms of processing, degraded in a lysosome-dependent manner following interaction with TRIM38. Phosphorylated.

Its subcellular location is the membrane. The protein resides in the endosome membrane. It is found in the lysosome membrane. The protein localises to the cytoplasm. It localises to the cytosol. Adapter required to activate the JNK and NF-kappa-B signaling pathways through the specific recognition of 'Lys-63'-linked polyubiquitin chains by its RanBP2-type zinc finger (NZF). Acts as an adapter linking MAP3K7/TAK1 and TRAF6 to 'Lys-63'-linked polyubiquitin chains. The RanBP2-type zinc finger (NZF) specifically recognizes Lys-63'-linked polyubiquitin chains unanchored or anchored to the substrate proteins such as RIPK1/RIP1 and RIPK2: this acts as a scaffold to organize a large signaling complex to promote autophosphorylation of MAP3K7/TAK1, and subsequent activation of I-kappa-B-kinase (IKK) core complex by MAP3K7/TAK1. Also recognizes and binds Lys-63'-linked polyubiquitin chains of heterotypic 'Lys-63'-/'Lys-48'-linked branched ubiquitin chains. Regulates the IL1-mediated translocation of NCOR1 out of the nucleus. Involved in heart development. This is TGF-beta-activated kinase 1 and MAP3K7-binding protein 2 (Tab2) from Rattus norvegicus (Rat).